A 276-amino-acid polypeptide reads, in one-letter code: Diaminopimelate epimerase (276 aa).

Residues N11, Q44, and N64 each contribute to the substrate site. Residue C73 is the Proton donor of the active site. Substrate contacts are provided by residues G74–N75, N157, N190, and E208–R209. Catalysis depends on C217, which acts as the Proton acceptor. G218–S219 contacts substrate.

The protein belongs to the diaminopimelate epimerase family. Homodimer.

The protein resides in the cytoplasm. It carries out the reaction (2S,6S)-2,6-diaminopimelate = meso-2,6-diaminopimelate. It functions in the pathway amino-acid biosynthesis; L-lysine biosynthesis via DAP pathway; DL-2,6-diaminopimelate from LL-2,6-diaminopimelate: step 1/1. Catalyzes the stereoinversion of LL-2,6-diaminopimelate (L,L-DAP) to meso-diaminopimelate (meso-DAP), a precursor of L-lysine and an essential component of the bacterial peptidoglycan. This Blochmanniella floridana protein is Diaminopimelate epimerase.